Reading from the N-terminus, the 1024-residue chain is Importin-8 (1024 aa).

One can recognise an Importin N-terminal domain in the interval 22 to 102 (AENELNQSYK…RENMVEAIIR (81 aa)). Positions 896-969 (FGRAQGSEEE…YSTPLDCDNG (74 aa)) are disordered. Acidic residues-rich tracts occupy residues 902–917 (SEEE…EDEV) and 934–952 (DNED…DEGL).

The protein belongs to the importin beta family.

Its subcellular location is the cytoplasm. It localises to the nucleus. Functionally, involved in nuclear protein import, either by acting as autonomous nuclear transport receptor or as an adapter-like protein in association with the importin-beta subunit KPNB1. Acting autonomously, may serve as receptor for nuclear localization signals (NLS) and promote translocation of import substrates through the nuclear pore complex (NPC) by an energy requiring, Ran-dependent mechanism. At the nucleoplasmic side of the NPC, Ran binds to importin, the importin/substrate complex dissociates and importin is re-exported from the nucleus to the cytoplasm where GTP hydrolysis releases Ran. The directionality of nuclear import is thought to be conferred by an asymmetric distribution of the GTP- and GDP-bound forms of Ran between the cytoplasm and nucleus. In vitro mediates the nuclear import of the signal recognition particle protein SRP19. May also be involved in cytoplasm-to-nucleus shuttling of a broad spectrum of other cargos, including Argonaute-microRNAs complexes, the JUN protein, RELA/NF-kappa-B p65 subunit, the translation initiation factor EIF4E and a set of receptor-activated mothers against decapentaplegic homolog (SMAD) transcription factors that play a critical role downstream of the large family of transforming growth factor beta and bone morphogenetic protein (BMP) cytokines. In Danio rerio (Zebrafish), this protein is Importin-8 (ipo8).